A 216-amino-acid polypeptide reads, in one-letter code: Adenylate kinase (216 aa).

10 to 15 (GSGKGT) is an ATP binding site. Residues 30–59 (STGEILRKEIKKNKKTKKYIKKTINKGKLI) form an NMP region. AMP is bound by residues Thr-31, Arg-36, 57–59 (KLI), 85–88 (GFPR), and Gln-92. The segment at 121–158 (GRLIHASSGRTYHKIFNPPKIKNKDDITQEKLCSRNDD) is LID. ATP is bound by residues Arg-122 and 131–132 (TY). The AMP site is built by Arg-155 and Arg-166. Gln-196 contacts ATP.

It belongs to the adenylate kinase family. In terms of assembly, monomer.

Its subcellular location is the cytoplasm. It catalyses the reaction AMP + ATP = 2 ADP. It participates in purine metabolism; AMP biosynthesis via salvage pathway; AMP from ADP: step 1/1. Functionally, catalyzes the reversible transfer of the terminal phosphate group between ATP and AMP. Plays an important role in cellular energy homeostasis and in adenine nucleotide metabolism. The polypeptide is Adenylate kinase (Buchnera aphidicola subsp. Cinara cedri (strain Cc)).